Reading from the N-terminus, the 569-residue chain is Urease subunit alpha (569 aa).

Residues 131–569 enclose the Urease domain; that stretch reads GGMDAHIHYI…LPMAQRYFLF (439 aa). Ni(2+)-binding residues include H136, H138, and K218. K218 carries the N6-carboxylysine modification. H220 is a substrate binding site. Residues H247 and H273 each coordinate Ni(2+). The Proton donor role is filled by H321. D361 contributes to the Ni(2+) binding site.

This sequence belongs to the metallo-dependent hydrolases superfamily. Urease alpha subunit family. As to quaternary structure, heterotrimer of UreA (gamma), UreB (beta) and UreC (alpha) subunits. Three heterotrimers associate to form the active enzyme. It depends on Ni cation as a cofactor. Carboxylation allows a single lysine to coordinate two nickel ions.

Its subcellular location is the cytoplasm. The enzyme catalyses urea + 2 H2O + H(+) = hydrogencarbonate + 2 NH4(+). The protein operates within nitrogen metabolism; urea degradation; CO(2) and NH(3) from urea (urease route): step 1/1. This chain is Urease subunit alpha, found in Agrobacterium fabrum (strain C58 / ATCC 33970) (Agrobacterium tumefaciens (strain C58)).